A 97-amino-acid chain; its full sequence is Conotoxin Cal6.1a (97 aa).

Residues 1 to 22 (MKLTTVLVVALLVLAACQFTVT) form the signal peptide. The tract at residues 23–46 (DNSGDDPENPSLRSVGENQNPDST) is disordered. Positions 23-68 (DNSGDDPENPSLRSVGENQNPDSTKTITAWATRDMTNMRRGLNRPS) are excised as a propeptide. 3 disulfide bridges follow: C71-C87, C78-C91, and C86-C96.

It belongs to the conotoxin O1 superfamily. In terms of tissue distribution, expressed by the venom duct.

It localises to the secreted. Functionally, probable neurotoxin with unknown target. Possibly targets ion channels. This is Conotoxin Cal6.1a from Californiconus californicus (California cone).